The primary structure comprises 1099 residues: Ras-associating and dilute domain-containing protein (1099 aa).

A Ras-associating domain is found at 90 to 193; sequence APGVLKVFGD…RRFELRKKSD (104 aa). The disordered stretch occupies residues 221 to 265; it reads AKGTPALTSEAAQSSPPTRLRRTVSETSLSPAPSLPEAAQRPEEP. Residues 226–237 show a composition bias toward polar residues; it reads ALTSEAAQSSPP. A phosphoserine mark is found at S235, S245, S248, and S250. The FHA domain maps to 302–377; the sequence is HTVGQRTPSS…LQHGDLLSLG (76 aa). A phosphoserine mark is found at S422 and S432. The Dilute domain maps to 525–792; it reads ADLVPDLQHI…PDGPEAFQSE (268 aa). A disordered region spans residues 868-941; the sequence is GHGCPLANRD…STPLGLEPAG (74 aa). A Phosphoserine modification is found at S915. The segment covering 916-927 has biased composition (polar residues); that stretch reads QAGSLHTDSSCM. A PDZ domain is found at 1000-1085; it reads MVELERGPSG…KMRFLVAKSD (86 aa).

Belongs to the RADIL family. In terms of assembly, interacts with RAP1A; in a GTP-dependent manner. Does not interact with members of the Ras family. Interacts (via PDZ domain) with KIF14; is recruited to the microtubule network restricting its interaction with activated RAP1A.

Its function is as follows. Downstream effector of Rap required for cell adhesion and migration of neural crest precursors during development. This Mus musculus (Mouse) protein is Ras-associating and dilute domain-containing protein (Radil).